The sequence spans 289 residues: MALAAARRVLLQAGSRLGRRGAVDGARRFSNKRVLVEKEGEAGIAVMKFKNPPVNSLSLEFLTEFVISLEKLENDKSIRGVILTSERPGIFSAGLDLMEMYGRNPAHYAEYWKAVQELWLRLYLSNLTLISAINGASPAGGCLMALTCDYRIMADNSKYTIGLNESLLGIVAPFWLKDNYVNTIGHRAAERALQLGTLFPPAEALKVGLVDEVVPEDQVHSKARSVMAKWFTIPDHSRQLTKSMMRKATADNLIKQREADIQNFTSFISRDSIQKSLHVYLEKLKQKKG.

The N-terminal 28 residues, 1 to 28, are a transit peptide targeting the mitochondrion; it reads MALAAARRVLLQAGSRLGRRGAVDGARR. Position 48 is an N6-acetyllysine; alternate (lysine 48). An N6-succinyllysine; alternate modification is found at lysine 48. At lysine 71 the chain carries N6-succinyllysine. Lysine 76 is subject to N6-acetyllysine. Substrate-binding positions include 93–97, glycine 140, and asparagine 164; that span reads AGLDL. Residues lysine 222, lysine 229, and lysine 255 each carry the N6-acetyllysine; alternate modification. 3 positions are modified to N6-succinyllysine; alternate: lysine 222, lysine 229, and lysine 255. Position 275 is an N6-succinyllysine (lysine 275). Position 283 is an N6-acetyllysine; alternate (lysine 283). Residue lysine 283 is modified to N6-succinyllysine; alternate.

The protein belongs to the enoyl-CoA hydratase/isomerase family. As to quaternary structure, homotrimer.

Its subcellular location is the mitochondrion matrix. It catalyses the reaction a (3Z)-enoyl-CoA = a 4-saturated (2E)-enoyl-CoA. The enzyme catalyses a (3E)-enoyl-CoA = a 4-saturated (2E)-enoyl-CoA. It carries out the reaction (3Z)-octenoyl-CoA = (2E)-octenoyl-CoA. The catalysed reaction is (2E)-tetradecenoyl-CoA = (3Z)-tetradecenoyl-CoA. It catalyses the reaction (3Z)-dodecenoyl-CoA = (2E)-dodecenoyl-CoA. The enzyme catalyses (3Z)-hexenoyl-CoA = (2E)-hexenoyl-CoA. It carries out the reaction (3Z)-decenoyl-CoA = (2E)-decenoyl-CoA. Its pathway is lipid metabolism; fatty acid beta-oxidation. Functionally, key enzyme of fatty acid beta-oxidation. Able to isomerize both 3-cis (3Z) and 3-trans (3E) double bonds into the 2-trans (2E) form in a range of enoyl-CoA species, with a preference for (3Z)-enoyl-CoAs over (3E)-enoyl-CoAs. The catalytic efficiency of this enzyme is not affected by the fatty acyl chain length. This is Enoyl-CoA delta isomerase 1, mitochondrial from Rattus norvegicus (Rat).